The sequence spans 361 residues: Geranylgeranyl pyrophosphate synthase 3 (361 aa).

Positions 44–63 are disordered; the sequence is DSNGSKELAPNGAQSRVQKP. Isopentenyl diphosphate-binding residues include K81, R84, and H113. D120 and D124 together coordinate Mg(2+). R129 contacts dimethylallyl diphosphate. R130 is a binding site for isopentenyl diphosphate. Positions 207, 208, and 244 each coordinate dimethylallyl diphosphate. D247 provides a ligand contact to Mg(2+). Dimethylallyl diphosphate contacts are provided by N251, K261, and K271.

It belongs to the FPP/GGPP synthase family. Requires Mg(2+) as cofactor.

It carries out the reaction isopentenyl diphosphate + dimethylallyl diphosphate = (2E)-geranyl diphosphate + diphosphate. It catalyses the reaction isopentenyl diphosphate + (2E)-geranyl diphosphate = (2E,6E)-farnesyl diphosphate + diphosphate. The catalysed reaction is isopentenyl diphosphate + (2E,6E)-farnesyl diphosphate = (2E,6E,10E)-geranylgeranyl diphosphate + diphosphate. Its function is as follows. Geranylgeranyl pyrophosphate synthase; part of the gene cluster 25 that mediates the biosynthesis of an isoprenoid secondary metabolite. This chain is Geranylgeranyl pyrophosphate synthase 3 (GGS3), found in Zymoseptoria tritici (strain CBS 115943 / IPO323) (Speckled leaf blotch fungus).